We begin with the raw amino-acid sequence, 573 residues long: Sulfite reductase [NADPH] hemoprotein beta-component (573 aa).

Cys-438, Cys-444, Cys-483, and Cys-487 together coordinate [4Fe-4S] cluster. Siroheme is bound at residue Cys-487.

This sequence belongs to the nitrite and sulfite reductase 4Fe-4S domain family. As to quaternary structure, alpha(8)-beta(8). The alpha component is a flavoprotein, the beta component is a hemoprotein. Requires siroheme as cofactor. [4Fe-4S] cluster serves as cofactor.

It catalyses the reaction hydrogen sulfide + 3 NADP(+) + 3 H2O = sulfite + 3 NADPH + 4 H(+). The protein operates within sulfur metabolism; hydrogen sulfide biosynthesis; hydrogen sulfide from sulfite (NADPH route): step 1/1. Component of the sulfite reductase complex that catalyzes the 6-electron reduction of sulfite to sulfide. This is one of several activities required for the biosynthesis of L-cysteine from sulfate. The chain is Sulfite reductase [NADPH] hemoprotein beta-component from Nitrosomonas eutropha (strain DSM 101675 / C91 / Nm57).